A 125-amino-acid polypeptide reads, in one-letter code: Fluoride-specific ion channel FluC (125 aa).

4 helical membrane-spanning segments follow: residues 1–21 (MIQA…RYFV), 32–52 (AFPW…GVFA), 68–88 (LLIT…LDAI), and 101–121 (IYIA…LAIM). Na(+) contacts are provided by G75 and T78.

It belongs to the fluoride channel Fluc/FEX (TC 1.A.43) family.

It is found in the cell inner membrane. The enzyme catalyses fluoride(in) = fluoride(out). With respect to regulation, na(+) is not transported, but it plays an essential structural role and its presence is essential for fluoride channel function. In terms of biological role, fluoride-specific ion channel. Important for reducing fluoride concentration in the cell, thus reducing its toxicity. This is Fluoride-specific ion channel FluC from Rhizobium etli (strain ATCC 51251 / DSM 11541 / JCM 21823 / NBRC 15573 / CFN 42).